Consider the following 160-residue polypeptide: Large ribosomal subunit protein uL18 (160 aa).

Belongs to the universal ribosomal protein uL18 family. In terms of assembly, part of the 50S ribosomal subunit. Contacts the 5S and 23S rRNAs.

Functionally, this is one of the proteins that bind and probably mediate the attachment of the 5S RNA into the large ribosomal subunit, where it forms part of the central protuberance. The chain is Large ribosomal subunit protein uL18 from Thermoplasma volcanium (strain ATCC 51530 / DSM 4299 / JCM 9571 / NBRC 15438 / GSS1).